The chain runs to 620 residues: Protein CNGC15b (620 aa).

Transmembrane regions (helical) follow at residues 73–93 (IFLVACLISLFVDPLFFYLPI), 102–122 (IGIAVEVFLIIIRSIADVFYV), 161–181 (GFFLDFIAALPLPQVLIWIVI), 198–218 (FIIIIQYLPRLFLIFPLSSQI), 237–257 (LMLYMLASHVLGACWYLLSIE), and 356–376 (GEIMFAIVIATLGLVLFALLI). 462-559 (LFDAMDERML…SSTRTVKAIS (98 aa)) is an a nucleoside 3',5'-cyclic phosphate binding site.

It belongs to the cyclic nucleotide-gated cation channel (TC 1.A.1.5) family. As to quaternary structure, interacts (via N-terminus) with DMI1 (via c-terminus). The Nod factor has no effect on this interaction, implying that the complex is maintained after activation. As to expression, expressed in roots, stems, leaves, flowers and pods.

It is found in the nucleus membrane. Its function is as follows. Cyclic nucleotide-gated channel involved in the establishment of both rhizobial and mycorrhizal associations. Required for full activation of nuclear-localized Ca(2+) oscillations by Nod and Myc factors. Simultaneous activation of the K(+)-permeable channel DMI1 and the Ca(2+) channel CNGC15 can give rise to sustained Ca(2+) oscillations. May function during fertilization in both female and male gametophytic Ca(2+) signaling. In Medicago truncatula (Barrel medic), this protein is Protein CNGC15b.